Consider the following 407-residue polypeptide: Probable protein S-acyltransferase 9 (407 aa).

Transmembrane regions (helical) follow at residues 28-48 (WSIP…SVFV) and 62-82 (GHVF…LLFL). The 44-residue stretch at 136–179 (KYCDTCMLYRPPRCSHCSICNNCVERFDHHCPWRNYRYFFMFVS) folds into the DHHC domain. Cys166 (S-palmitoyl cysteine intermediate) is an active-site residue. Helical transmembrane passes span 174–194 (FFMF…MSAL) and 217–237 (AVML…LTGF). Positions 300-407 (LATTWERPEE…RSYAAAEEGR (108 aa)) are disordered. Basic and acidic residues predominate over residues 346-356 (DTAHHKIDIDQ).

Belongs to the DHHC palmitoyltransferase family. Mainly expressed in seeds.

It is found in the cell membrane. The catalysed reaction is L-cysteinyl-[protein] + hexadecanoyl-CoA = S-hexadecanoyl-L-cysteinyl-[protein] + CoA. In terms of biological role, palmitoyl acyltransferase. This chain is Probable protein S-acyltransferase 9 (PAT09), found in Arabidopsis thaliana (Mouse-ear cress).